We begin with the raw amino-acid sequence, 245 residues long: Enolase-phosphatase E1 (245 aa).

Residues Asp14 and Glu16 each coordinate Mg(2+). Substrate contacts are provided by residues 141 to 142 and Lys175; that span reads SS. Residue Asp200 coordinates Mg(2+).

Belongs to the HAD-like hydrolase superfamily. MasA/MtnC family. In terms of assembly, monomer. It depends on Mg(2+) as a cofactor.

Its subcellular location is the cytoplasm. It is found in the nucleus. It catalyses the reaction 5-methylsulfanyl-2,3-dioxopentyl phosphate + H2O = 1,2-dihydroxy-5-(methylsulfanyl)pent-1-en-3-one + phosphate. It functions in the pathway amino-acid biosynthesis; L-methionine biosynthesis via salvage pathway; L-methionine from S-methyl-5-thio-alpha-D-ribose 1-phosphate: step 3/6. It participates in amino-acid biosynthesis; L-methionine biosynthesis via salvage pathway; L-methionine from S-methyl-5-thio-alpha-D-ribose 1-phosphate: step 4/6. Functionally, bifunctional enzyme that catalyzes the enolization of 2,3-diketo-5-methylthiopentyl-1-phosphate (DK-MTP-1-P) into the intermediate 2-hydroxy-3-keto-5-methylthiopentenyl-1-phosphate (HK-MTPenyl-1-P), which is then dephosphorylated to form the acireductone 1,2-dihydroxy-3-keto-5-methylthiopentene (DHK-MTPene). The chain is Enolase-phosphatase E1 from Drosophila grimshawi (Hawaiian fruit fly).